The chain runs to 735 residues: Ion-translocating oxidoreductase complex subunit C (735 aa).

2 4Fe-4S ferredoxin-type domains span residues 368–397 (MGAP…QQLY) and 407–436 (KATA…VQYF). Residues cysteine 377, cysteine 380, cysteine 383, cysteine 387, cysteine 416, cysteine 419, cysteine 422, and cysteine 426 each contribute to the [4Fe-4S] cluster site. The tract at residues 534-711 (QARAKQAAHP…EPVEPADPRK (178 aa)) is disordered.

The protein belongs to the 4Fe4S bacterial-type ferredoxin family. RnfC subfamily. As to quaternary structure, the complex is composed of six subunits: RsxA, RsxB, RsxC, RsxD, RsxE and RsxG. [4Fe-4S] cluster serves as cofactor.

Its subcellular location is the cell inner membrane. Functionally, part of a membrane-bound complex that couples electron transfer with translocation of ions across the membrane. Required to maintain the reduced state of SoxR. The polypeptide is Ion-translocating oxidoreductase complex subunit C (Salmonella paratyphi A (strain ATCC 9150 / SARB42)).